Here is a 105-residue protein sequence, read N- to C-terminus: Gastrin/cholecystokinin-like peptide (105 aa).

Residues 1–20 (MKTKVFLGLILSAAVTACLC) form the signal peptide. Positions 21–38 (RPAAKAPGGSHRPTSSLA) are excised as a propeptide. Residues 24 to 51 (AKAPGGSHRPTSSLARRDWPEPPSQEQQ) are disordered. Position 87 is a sulfotyrosine (Tyr87). The residue at position 93 (Phe93) is a Phenylalanine amide. Positions 97–105 (STEDAADAA) are excised as a propeptide.

Belongs to the gastrin/cholecystokinin family.

Its subcellular location is the secreted. Its function is as follows. Potent stimulus of gastric acid, but not of pancreatic secretion. The chain is Gastrin/cholecystokinin-like peptide from Gallus gallus (Chicken).